A 232-amino-acid chain; its full sequence is Small ribosomal subunit protein uS3 (232 aa).

Positions 39-107 constitute a KH type-2 domain; the sequence is VRQFLTKELA…PAQINIAEVR (69 aa).

This sequence belongs to the universal ribosomal protein uS3 family. In terms of assembly, part of the 30S ribosomal subunit. Forms a tight complex with proteins S10 and S14.

In terms of biological role, binds the lower part of the 30S subunit head. Binds mRNA in the 70S ribosome, positioning it for translation. In Yersinia pseudotuberculosis serotype O:1b (strain IP 31758), this protein is Small ribosomal subunit protein uS3.